We begin with the raw amino-acid sequence, 239 residues long: 7-cyano-7-deazaguanine synthase (239 aa).

8-18 (FSGGLDSTACL) contributes to the ATP binding site. The Zn(2+) site is built by C194, C209, C212, and C215.

The protein belongs to the QueC family. Zn(2+) is required as a cofactor.

It catalyses the reaction 7-carboxy-7-deazaguanine + NH4(+) + ATP = 7-cyano-7-deazaguanine + ADP + phosphate + H2O + H(+). It functions in the pathway purine metabolism; 7-cyano-7-deazaguanine biosynthesis. Functionally, catalyzes the ATP-dependent conversion of 7-carboxy-7-deazaguanine (CDG) to 7-cyano-7-deazaguanine (preQ(0)). In Pyrococcus horikoshii (strain ATCC 700860 / DSM 12428 / JCM 9974 / NBRC 100139 / OT-3), this protein is 7-cyano-7-deazaguanine synthase.